The primary structure comprises 315 residues: Ribosomal RNA small subunit methyltransferase H (315 aa).

Residues 35–37 (AGH), Asp-55, Phe-84, Asp-105, and Gln-112 each bind S-adenosyl-L-methionine.

Belongs to the methyltransferase superfamily. RsmH family.

It localises to the cytoplasm. The catalysed reaction is cytidine(1402) in 16S rRNA + S-adenosyl-L-methionine = N(4)-methylcytidine(1402) in 16S rRNA + S-adenosyl-L-homocysteine + H(+). Its function is as follows. Specifically methylates the N4 position of cytidine in position 1402 (C1402) of 16S rRNA. The sequence is that of Ribosomal RNA small subunit methyltransferase H from Streptococcus agalactiae serotype III (strain NEM316).